We begin with the raw amino-acid sequence, 378 residues long: Queuine tRNA-ribosyltransferase (378 aa).

Residue aspartate 91 is the Proton acceptor of the active site. Residues 91–95, aspartate 145, glutamine 189, and glycine 216 contribute to the substrate site; that span reads DSGGF. The interval 247-253 is RNA binding; that stretch reads GVGKPED. The active-site Nucleophile is aspartate 266. Residues 271–275 form an RNA binding; important for wobble base 34 recognition region; that stretch reads TRNAR. Positions 304, 306, 309, and 335 each coordinate Zn(2+).

It belongs to the queuine tRNA-ribosyltransferase family. In terms of assembly, homodimer. Within each dimer, one monomer is responsible for RNA recognition and catalysis, while the other monomer binds to the replacement base PreQ1. Zn(2+) serves as cofactor.

The enzyme catalyses 7-aminomethyl-7-carbaguanine + guanosine(34) in tRNA = 7-aminomethyl-7-carbaguanosine(34) in tRNA + guanine. Its pathway is tRNA modification; tRNA-queuosine biosynthesis. Catalyzes the base-exchange of a guanine (G) residue with the queuine precursor 7-aminomethyl-7-deazaguanine (PreQ1) at position 34 (anticodon wobble position) in tRNAs with GU(N) anticodons (tRNA-Asp, -Asn, -His and -Tyr). Catalysis occurs through a double-displacement mechanism. The nucleophile active site attacks the C1' of nucleotide 34 to detach the guanine base from the RNA, forming a covalent enzyme-RNA intermediate. The proton acceptor active site deprotonates the incoming PreQ1, allowing a nucleophilic attack on the C1' of the ribose to form the product. After dissociation, two additional enzymatic reactions on the tRNA convert PreQ1 to queuine (Q), resulting in the hypermodified nucleoside queuosine (7-(((4,5-cis-dihydroxy-2-cyclopenten-1-yl)amino)methyl)-7-deazaguanosine). The chain is Queuine tRNA-ribosyltransferase from Vibrio atlanticus (strain LGP32) (Vibrio splendidus (strain Mel32)).